Reading from the N-terminus, the 106-residue chain is uncharacterized protein (106 aa).

Helical transmembrane passes span 10–30 (VYIQMVAFSPYRIVLPFVAFV) and 65–85 (LDFASAFVVPAASFVESLLAY).

It is found in the membrane. This is an uncharacterized protein from Saccharomyces cerevisiae (strain ATCC 204508 / S288c) (Baker's yeast).